Consider the following 142-residue polypeptide: Transcriptional regulator MraZ (142 aa).

2 consecutive SpoVT-AbrB domains span residues 5–47 (EYQH…TINE) and 76–119 (ACIV…SREK).

This sequence belongs to the MraZ family. Forms oligomers.

It is found in the cytoplasm. The protein localises to the nucleoid. In Clostridium botulinum (strain Alaska E43 / Type E3), this protein is Transcriptional regulator MraZ.